Here is a 33-residue protein sequence, read N- to C-terminus: MLFTIAWASLAAVFSFSIAMVVWGRNGDGTLNF.

Residues 2–22 (LFTIAWASLAAVFSFSIAMVV) traverse the membrane as a helical segment.

The protein belongs to the PetN family. The 4 large subunits of the cytochrome b6-f complex are cytochrome b6, subunit IV (17 kDa polypeptide, PetD), cytochrome f and the Rieske protein, while the 4 small subunits are PetG, PetL, PetM and PetN. The complex functions as a dimer.

The protein localises to the cellular thylakoid membrane. In terms of biological role, component of the cytochrome b6-f complex, which mediates electron transfer between photosystem II (PSII) and photosystem I (PSI), cyclic electron flow around PSI, and state transitions. This chain is Cytochrome b6-f complex subunit 8, found in Synechococcus sp. (strain CC9311).